A 228-amino-acid polypeptide reads, in one-letter code: Calcyclin-binding protein (228 aa).

Met-1 bears the N-acetylmethionine mark. Ala-2 is modified (N-acetylalanine). The tract at residues 2–80 (ASEELQKDLE…YTVKISNYGW (79 aa)) is interaction with SIAH1. Ser-3 is subject to Phosphoserine. N6-acetyllysine occurs at positions 8 and 19. Ser-34 carries the phosphoserine modification. Residues 73–167 (VKISNYGWDQ…VENTRWDYLT (95 aa)) enclose the CS domain. Residues 73 to 228 (VKISNYGWDQ…EKQAKGDTEF (156 aa)) form an interaction with SKP1 region. 2 positions are modified to N6-acetyllysine: Lys-85 and Lys-118. The interaction with S100A6 stretch occupies residues 154 to 228 (CRKKVENTRW…EKQAKGDTEF (75 aa)). Residues 168-228 (QVEKECKEKE…EKQAKGDTEF (61 aa)) enclose the SGS domain.

As to quaternary structure, homodimer. Interacts with proteins of the S100 family S100A1, S100A6, S100B, S100P and S100A12 in a calcium-dependent manner. Component of some large E3 complex at least composed of UBE2D1, SIAH1, CACYBP/SIP, SKP1, APC and TBL1X. Interacts directly with SIAH1, SIAH2 and SKP1. Post-translationally, phosphorylated on serine residues. Phosphorylated upon induction by RA or at high calcium concentrations.

It localises to the nucleus. The protein localises to the cytoplasm. Functionally, may be involved in calcium-dependent ubiquitination and subsequent proteasomal degradation of target proteins. Probably serves as a molecular bridge in ubiquitin E3 complexes. Participates in the ubiquitin-mediated degradation of beta-catenin (CTNNB1). This is Calcyclin-binding protein (CACYBP) from Homo sapiens (Human).